We begin with the raw amino-acid sequence, 161 residues long: Serine-protein kinase RsbW (161 aa).

This sequence belongs to the anti-sigma-factor family.

It carries out the reaction L-seryl-[protein] + ATP = O-phospho-L-seryl-[protein] + ADP + H(+). The catalysed reaction is L-threonyl-[protein] + ATP = O-phospho-L-threonyl-[protein] + ADP + H(+). In terms of biological role, negative regulator of sigma-B activity. Phosphorylates and inactivates its specific antagonist protein, RsbV. Upon phosphorylation of RsbV, RsbW is released and binds to sigma-B, thereby blocking its ability to form an RNA polymerase holoenzyme (E-sigma-B). The polypeptide is Serine-protein kinase RsbW (Bacillus licheniformis (strain ATCC 14580 / DSM 13 / JCM 2505 / CCUG 7422 / NBRC 12200 / NCIMB 9375 / NCTC 10341 / NRRL NRS-1264 / Gibson 46)).